Here is a 572-residue protein sequence, read N- to C-terminus: MTLKITRRAYAEMFGPTTGDRVRLADTDLIVEVERDYTIYGEEVKFGGGKVIRDGMGQSQRESKDCADTVITNALIIDHWGIVKADIGLKHGRIAAIGKAGNPDIQPGVTIVIGPGTEIIAGEGMIVTAGGVDTHIHFICPQQIDEALNSGVTTMIGGGTGPATGTYATTCTPGPWHLQRMLQAADAYPMNIGFLGKGNGSLPGALREQIDAGAIGLKLHEDWGSTPAAIDCCLGVADDTDTQVAIHTDTLNESGFVEATIAAFKGRTIHTYHTEGAGGGHAPDIIRVCGESNVLPSSTNPTRPFTVNTLDEHLDMLMVCHHLDASIAEDIAFAESRIRRETIAAEDILHDLGAFSMLSSDSQAMGRVGEVILRTWQTAHKMKAQRGKLAGDPNDARGGHDNFRVKRYVAKYTINPAITHGIAHEVGSIEVGKWADLVLWKPAFFGVKPSLILKGGMIASAAMGDANASIPTPQPVHYRPMFAAAGGALARSSLSFLSQSAAQAGVAERYGLAKTTAVVRGTRAVTKAQMIHNDWQPSITVDPETYQVVADGMLLTCEPAEVLPMAQRYFLF.

The Urease domain maps to glycine 130–phenylalanine 572. Ni(2+) contacts are provided by histidine 135, histidine 137, and lysine 218. Residue lysine 218 is modified to N6-carboxylysine. Substrate is bound at residue histidine 220. Ni(2+) contacts are provided by histidine 247 and histidine 273. The active-site Proton donor is the histidine 321. Aspartate 361 serves as a coordination point for Ni(2+).

This sequence belongs to the metallo-dependent hydrolases superfamily. Urease alpha subunit family. Heterotrimer of UreA (gamma), UreB (beta) and UreC (alpha) subunits. Three heterotrimers associate to form the active enzyme. Ni cation is required as a cofactor. Carboxylation allows a single lysine to coordinate two nickel ions.

Its subcellular location is the cytoplasm. The enzyme catalyses urea + 2 H2O + H(+) = hydrogencarbonate + 2 NH4(+). The protein operates within nitrogen metabolism; urea degradation; CO(2) and NH(3) from urea (urease route): step 1/1. The sequence is that of Urease subunit alpha from Ralstonia nicotianae (strain ATCC BAA-1114 / GMI1000) (Ralstonia solanacearum).